Reading from the N-terminus, the 570-residue chain is MKRFNYGFFHLVLFLISLLLLGSGICMDPFSYDQSLKSECLMEPPQTTANTGGEGVKELKINENGGIRNVVEGVDLREGNIYITSAWVKLRNESQRKVGMTFSEKNGRNVFGGEVMAKRGCWSLLKGGITADFSGPIDIFFESDGLAGLEISVQNVRMQRFHKTQWRLQQDQVIEKIRKNKVRFQMSFKNKSALEGSVISIEQIKPSFLLGCAMNYRILESDSYREWFVSRFRLTSFTNEMKWYATEAVRGQENYKIADSMMQLAEENAILVKGHTVLWDDKYWQPNWVKTITDPEDLKNVTLNRMNSVMKRYKGRLIGWDVMNENVHFNYFENMLGGNASAIVYSLASKLDPDIPLFLNEFNTVEYDKDRVVSPVNVVKKMQEIVSFPGNNNIKGGIGAQGHFAPVQPNLAYMRYALDTLGSLSFPVWLTEVDMFKCPDQVKYMEDILREAYSHPAVKAIILYGGPEVSGFDKLTLADKDFKNTQAGDLIDKLLQEWKQEPVEIPIQHHEHNDEEGGRIIGFSPEISLLHGHYRVTVTNPSMKNLSTRFSVEVTKESGHLQEVQLVIDA.

A signal peptide spans 1 to 24 (MKRFNYGFFHLVLFLISLLLLGSG). 3 N-linked (GlcNAc...) asparagine glycosylation sites follow: Asn92, Asn190, and Asn300. Residues 195-494 (EGSVISIEQI…TQAGDLIDKL (300 aa)) form the GH10 domain. The active-site Proton donor is Glu325. An N-linked (GlcNAc...) asparagine glycan is attached at Asn339. The active-site Nucleophile is Glu432. N-linked (GlcNAc...) asparagine glycosylation occurs at Asn545.

This sequence belongs to the glycosyl hydrolase 10 (cellulase F) family.

It catalyses the reaction Endohydrolysis of (1-&gt;4)-beta-D-xylosidic linkages in xylans.. It functions in the pathway glycan degradation; xylan degradation. Binds to and hydrolyzes insoluble and soluble xylan substrates. In Arabidopsis thaliana (Mouse-ear cress), this protein is Endo-1,4-beta-xylanase 4.